Reading from the N-terminus, the 412-residue chain is Subtilisin-like protease 6 (412 aa).

An N-terminal signal peptide occupies residues 1 to 20; that stretch reads MGFITKAIPIVLAALSTVNG. Residues 21 to 126 constitute a propeptide that is removed on maturation; the sequence is ARILEAGPHA…VVRTTTNGTN (106 aa). The Inhibitor I9 domain maps to 36–120; sequence KYIVVMKREV…FIEPDFVVRT (85 aa). 2 N-linked (GlcNAc...) asparagine glycosylation sites follow: N123 and N126. The 278-residue stretch at 135–412 folds into the Peptidase S8 domain; sequence SWGLARVGSK…GKLIYNGSGK (278 aa). Active-site charge relay system residues include D167 and H198. N-linked (GlcNAc...) asparagine glycosylation is found at N252 and N264. The Charge relay system role is filled by S358. A glycan (N-linked (GlcNAc...) asparagine) is linked at N408.

It belongs to the peptidase S8 family.

It is found in the secreted. Its function is as follows. Secreted subtilisin-like serine protease with keratinolytic activity that contributes to pathogenicity. The protein is Subtilisin-like protease 6 (SUB6) of Trichophyton rubrum (Athlete's foot fungus).